A 478-amino-acid polypeptide reads, in one-letter code: Protein nucleotidyltransferase YdiU (478 aa).

Residues G84, G86, R87, K107, D119, G120, R170, and R177 each contribute to the ATP site. D246 (proton acceptor) is an active-site residue. Mg(2+) is bound by residues N247 and D256. D256 contributes to the ATP binding site.

It belongs to the SELO family. It depends on Mg(2+) as a cofactor. Requires Mn(2+) as cofactor.

It catalyses the reaction L-seryl-[protein] + ATP = 3-O-(5'-adenylyl)-L-seryl-[protein] + diphosphate. The enzyme catalyses L-threonyl-[protein] + ATP = 3-O-(5'-adenylyl)-L-threonyl-[protein] + diphosphate. It carries out the reaction L-tyrosyl-[protein] + ATP = O-(5'-adenylyl)-L-tyrosyl-[protein] + diphosphate. The catalysed reaction is L-histidyl-[protein] + UTP = N(tele)-(5'-uridylyl)-L-histidyl-[protein] + diphosphate. It catalyses the reaction L-seryl-[protein] + UTP = O-(5'-uridylyl)-L-seryl-[protein] + diphosphate. The enzyme catalyses L-tyrosyl-[protein] + UTP = O-(5'-uridylyl)-L-tyrosyl-[protein] + diphosphate. Nucleotidyltransferase involved in the post-translational modification of proteins. It can catalyze the addition of adenosine monophosphate (AMP) or uridine monophosphate (UMP) to a protein, resulting in modifications known as AMPylation and UMPylation. The chain is Protein nucleotidyltransferase YdiU from Escherichia coli O157:H7.